Here is a 408-residue protein sequence, read N- to C-terminus: DNA polymerase processivity factor (408 aa).

The Nuclear localization signal signature appears at 344-353 (KKRRNLLTKR).

This sequence belongs to the herpesviridae DNA polymerase processivity factor family. In terms of assembly, interacts with the DNA polymerase catalytic subunit. Interacts with the origin-binding protein.

It localises to the host nucleus. In terms of biological role, plays an essential role in viral DNA replication by acting as the polymerase accessory subunit. Associates with the viral polymerase to increase its processivity and forms high-affinity direct interactions with DNA. Facilitates the origin-binding protein loading onto DNA thus increasing its ability to assemble into a functional complex capable of unwinding duplex DNA. In Varicella-zoster virus (strain Oka vaccine) (HHV-3), this protein is DNA polymerase processivity factor.